The sequence spans 140 residues: MTIQYTFSMIKPDVIKRNKIGQVNTYLENAGLKIVAQKMKFLTKYEAECFYDEHRARPFFNSLVEYITSGAVVLQVLKGEDAITLNRIIMGATNPAEAKEGTIRKDLGESIEANSIHGSDSENSAKREIKFFFSKSEIIE.

6 residues coordinate ATP: Lys11, Phe59, Arg87, Thr93, Arg104, and Asn114. His117 functions as the Pros-phosphohistidine intermediate in the catalytic mechanism.

It belongs to the NDK family. In terms of assembly, homotetramer. It depends on Mg(2+) as a cofactor.

The protein localises to the cytoplasm. It carries out the reaction a 2'-deoxyribonucleoside 5'-diphosphate + ATP = a 2'-deoxyribonucleoside 5'-triphosphate + ADP. The catalysed reaction is a ribonucleoside 5'-diphosphate + ATP = a ribonucleoside 5'-triphosphate + ADP. Functionally, major role in the synthesis of nucleoside triphosphates other than ATP. The ATP gamma phosphate is transferred to the NDP beta phosphate via a ping-pong mechanism, using a phosphorylated active-site intermediate. The protein is Nucleoside diphosphate kinase of Rickettsia typhi (strain ATCC VR-144 / Wilmington).